Here is a 503-residue protein sequence, read N- to C-terminus: ATP synthase subunit alpha (503 aa).

An ATP-binding site is contributed by 170–177 (GDKQTGKT).

This sequence belongs to the ATPase alpha/beta chains family. In terms of assembly, F-type ATPases have 2 components, CF(1) - the catalytic core - and CF(0) - the membrane proton channel. CF(1) has five subunits: alpha(3), beta(3), gamma(1), delta(1), epsilon(1). CF(0) has three main subunits: a(1), b(2) and c(9-12). The alpha and beta chains form an alternating ring which encloses part of the gamma chain. CF(1) is attached to CF(0) by a central stalk formed by the gamma and epsilon chains, while a peripheral stalk is formed by the delta and b chains.

Its subcellular location is the cell inner membrane. The enzyme catalyses ATP + H2O + 4 H(+)(in) = ADP + phosphate + 5 H(+)(out). Functionally, produces ATP from ADP in the presence of a proton gradient across the membrane. The alpha chain is a regulatory subunit. In Helicobacter pylori (strain P12), this protein is ATP synthase subunit alpha.